Consider the following 113-residue polypeptide: uncharacterized protein (113 aa).

The HTH hxlR-type domain occupies 16 to 113 (TPFGYTLSLI…CEWGVKNQNN (98 aa)).

This is an uncharacterized protein from Halalkalibacterium halodurans (strain ATCC BAA-125 / DSM 18197 / FERM 7344 / JCM 9153 / C-125) (Bacillus halodurans).